A 180-amino-acid polypeptide reads, in one-letter code: Crossover junction endodeoxyribonuclease RuvC (180 aa).

Residues Asp7, Glu66, and Asp138 contribute to the active site. Residues Asp7, Glu66, and Asp138 each coordinate Mg(2+).

The protein belongs to the RuvC family. In terms of assembly, homodimer which binds Holliday junction (HJ) DNA. The HJ becomes 2-fold symmetrical on binding to RuvC with unstacked arms; it has a different conformation from HJ DNA in complex with RuvA. In the full resolvosome a probable DNA-RuvA(4)-RuvB(12)-RuvC(2) complex forms which resolves the HJ. Mg(2+) serves as cofactor.

Its subcellular location is the cytoplasm. It catalyses the reaction Endonucleolytic cleavage at a junction such as a reciprocal single-stranded crossover between two homologous DNA duplexes (Holliday junction).. The RuvA-RuvB-RuvC complex processes Holliday junction (HJ) DNA during genetic recombination and DNA repair. Endonuclease that resolves HJ intermediates. Cleaves cruciform DNA by making single-stranded nicks across the HJ at symmetrical positions within the homologous arms, yielding a 5'-phosphate and a 3'-hydroxyl group; requires a central core of homology in the junction. The consensus cleavage sequence is 5'-(A/T)TT(C/G)-3'. Cleavage occurs on the 3'-side of the TT dinucleotide at the point of strand exchange. HJ branch migration catalyzed by RuvA-RuvB allows RuvC to scan DNA until it finds its consensus sequence, where it cleaves and resolves the cruciform DNA. This chain is Crossover junction endodeoxyribonuclease RuvC, found in Herminiimonas arsenicoxydans.